The chain runs to 1391 residues: Axoneme-associated protein mst101(2) (1391 aa).

Disordered regions lie at residues 170 to 213 and 280 to 300; these read ECNQ…GKKL and SSEPKKKGKKKKNDEKKEKEL. Residues 184 to 201 are compositionally biased toward basic residues; the sequence is TKKGKTKGKSGGGNKKRS. Positions 291-300 are enriched in basic and acidic residues; that stretch reads KNDEKKEKEL. Repeat copies occupy residues 332 to 347, 348 to 363, 364 to 379, 380 to 395, 396 to 411, 412 to 427, 428 to 443, 444 to 459, 460 to 475, 476 to 491, 492 to 507, 508 to 523, 524 to 539, 540 to 555, 556 to 571, 572 to 587, 588 to 603, 604 to 619, 620 to 635, 636 to 651, 652 to 667, 668 to 683, 684 to 699, 700 to 715, 716 to 731, 732 to 747, 748 to 763, 764 to 779, 780 to 795, 796 to 811, 812 to 827, 828 to 843, 844 to 859, 860 to 875, 876 to 891, 892 to 907, 908 to 923, 924 to 939, 940 to 955, 956 to 971, 972 to 987, 988 to 1003, 1004 to 1019, 1020 to 1035, 1036 to 1051, 1052 to 1067, 1068 to 1083, 1084 to 1099, 1100 to 1115, 1116 to 1131, 1132 to 1147, 1148 to 1163, 1164 to 1179, 1180 to 1195, 1196 to 1211, 1212 to 1227, 1228 to 1243, 1244 to 1259, and 1260 to 1275. Residues 332–1275 form a 59 X 16 AA approximate tandem repeats of [KR]-K-X-C-X-X-X-A-K-X-X-K-X-X-X-E region; the sequence is KKKCKDLGRK…AEKKRKCEKA (944 aa). Positions 370–429 are disordered; that stretch reads LAKKKKEADEKKKCEEAANKEKKAAEKKKCEKAAKERKEAAEKKKCEEAAKKEKEAAERK. A disordered region spans residues 516–577; that stretch reads KKEKETAEKK…EAAEKKKCEK (62 aa). A compositionally biased stretch (basic and acidic residues) spans 517 to 577; that stretch reads KEKETAEKKK…EAAEKKKCEK (61 aa). The span at 729 to 765 shows a compositional bias: basic residues; sequence AAEKKKCKKLAKKKKAGEKNKLKKGNKKGKKALKEKK. Disordered regions lie at residues 729–881, 900–922, and 934–1013; these read AAEK…EKAA, EKELAEKKKCEEAAKKEKEVAER, and KAAE…AAEK. A compositionally biased stretch (basic and acidic residues) spans 766–881; sequence KCRELAKKKA…AEKKKCEKAA (116 aa). 2 stretches are compositionally biased toward basic residues: residues 934-949 and 956-976; these read KAAEKKKCKKLAKKEK and KLKKKAGKGKKKCKKLGKKSK. Basic and acidic residues predominate over residues 977 to 1013; that stretch reads RAAEKKKCAEAAKKEKEAATKKKCEERAKKQKEAAEK. Disordered stretches follow at residues 1076–1095 and 1104–1212; these read EKKQCEERAKKEKEAAEKKQ and KEAA…EEAA. The span at 1353–1370 shows a compositional bias: basic and acidic residues; sequence KKEKEAAEKKKRCKDLAK. The segment at 1353-1391 is disordered; it reads KKEKEAAEKKKRCKDLAKNKKKGHKKKGRNENRKKRTDC. A compositionally biased stretch (basic residues) spans 1371–1391; it reads NKKKGHKKKGRNENRKKRTDC.

Testis. Primary spermatocytes and early spermatids.

It is found in the cytoplasm. Possible structural role in the sperm tail. In Drosophila hydei (Fruit fly), this protein is Axoneme-associated protein mst101(2) (mst101(2)).